Here is a 117-residue protein sequence, read N- to C-terminus: uncharacterized protein (117 aa).

This is an uncharacterized protein from Acidianus convivator (ABV).